The primary structure comprises 138 residues: UPF0201 protein PYRAB09730 (138 aa).

Belongs to the UPF0201 family.

The polypeptide is UPF0201 protein PYRAB09730 (Pyrococcus abyssi (strain GE5 / Orsay)).